A 138-amino-acid polypeptide reads, in one-letter code: Putative membrane protein insertion efficiency factor (138 aa).

The segment at 71-138 is disordered; the sequence is YDPVPGTPEA…GTPSHTRGEN (68 aa). Over residues 81–113 the composition is skewed to basic and acidic residues; sequence RQWRELHPETARSKNEPIHDLTDDNPRDHEPAL. Residues 123–138 show a composition bias toward polar residues; that stretch reads PGSTHTGTPSHTRGEN.

The protein belongs to the UPF0161 family.

The protein resides in the cell membrane. In terms of biological role, could be involved in insertion of integral membrane proteins into the membrane. The sequence is that of Putative membrane protein insertion efficiency factor from Cutibacterium acnes (strain DSM 16379 / KPA171202) (Propionibacterium acnes).